The primary structure comprises 63 residues: Large ribosomal subunit protein bL35 (63 aa).

The protein belongs to the bacterial ribosomal protein bL35 family.

The chain is Large ribosomal subunit protein bL35 from Sulfurovum sp. (strain NBC37-1).